The chain runs to 904 residues: UPF0182 protein CKL_0015 (904 aa).

Helical transmembrane passes span 9–29 (SLIVILFVCILFLNKIVDFII), 47–67 (LIAICKLMIPLFIIIYISIVL), 96–116 (IFIIVNLIVSFLFSYAFAATY), 157–177 (ILSLIIFLGLITLVTYFTLSV), 208–228 (LAVLAALVMICVSIGYILKCI), 253–273 (YKIIAAASIISAVIIFISILV), and 279–299 (IIVSITVIVALILIKSLSYTV).

The protein belongs to the UPF0182 family.

Its subcellular location is the cell membrane. In Clostridium kluyveri (strain ATCC 8527 / DSM 555 / NBRC 12016 / NCIMB 10680 / K1), this protein is UPF0182 protein CKL_0015.